Reading from the N-terminus, the 571-residue chain is Optineurin (571 aa).

Disordered stretches follow at residues 1–32 (MSHQPLSCLTEKGDSPSESTGNGPPHLAHPNL) and 100–144 (LSHE…DQLR). Residues 38–170 (EELLQQMKEL…VSELQLKLNS (133 aa)) are a coiled coil. Positions 58–209 (MKLNNQAMKG…GPTRTVSIGT (152 aa)) are interaction with Rab8. Composition is skewed to basic and acidic residues over residues 100–123 (LSHENEKLKEELGKLKGKSERSSE) and 130–143 (RLPRAEAEQEKDQL). An LIR motif is present at residues 176–181 (DSFVEI). A Phosphoserine; by TBK1 modification is found at serine 177. Positions 186 to 197 (GEAEGSVKEIKH) are enriched in basic and acidic residues. Disordered stretches follow at residues 186–210 (GEAEGSVKEIKHSPGPTRTVSIGTS) and 255–291 (VSDFEKKASNRSEIETQTEGSTEKENEEEKGPETVGS). Serine 198 carries the phosphoserine modification. Positions 201 to 210 (PTRTVSIGTS) are enriched in polar residues. Residues 233 to 502 (CLREGNQKVE…LLKENDAFED (270 aa)) are a coiled coil. 2 stretches are compositionally biased toward basic and acidic residues: residues 255-268 (VSDFEKKASNRSEI) and 275-286 (STEKENEEEKGP). Serine 336 bears the Phosphoserine mark. The interaction with HD stretch occupies residues 405–571 (TRKESEKVDR…LQIHVMDCII (167 aa)). Positions 406–514 (RKESEKVDRA…RQSLMEMQSR (109 aa)) are interaction with MYO6. The UBAN motif lies at 468 to 473 (DFHAER). Position 520 is a phosphoserine (serine 520). Residues 541–571 (QRNIPIHSCPKCGEVLPDIDTLQIHVMDCII) form a CCHC NOA-type zinc finger. Cysteine 549, cysteine 552, histidine 565, and cysteine 569 together coordinate Zn(2+).

Self-associates. Interacts with HD. Interacts with GTF3A. Interacts with MYO6. Interacts (via UBAN) with ubiquitinated TFRC. Interacts with GTP-bound Rab8 (RAB8A and/or RAB8B). Interacts with TBC1D17. Interacts with TBK1. Interacts with TRAF3. Binds to linear ubiquitin chains. Interacts with LC3 family members MAP1LC3A, MAP1LC3B, GABARAP, GABARAPL1 and GABARAPL2; OPTN phosphorylation increases the association (at least with MAP1LC3B). Interacts with RAB12; the interaction may be indirect. Interacts with TBK1; this interaction leads to the Golgi localization of TBK1 and its subsequent activation. Interacts with palmitoyltransferase ZDHHC17/HIP14; the interaction does not lead to palmitoylation of OPTN. Interacts with CYLD. Interacts with TOM1; the interaction is indirect and is mediated by MYO6, which acts as a bridge between TOM1 and OPTN. Interacts with USP12; the interaction is independent of USP12 deubiquitinase activity and may be involved in regulation of autophagic flux. Phosphorylated by TBK1, leading to restrict bacterial proliferation in case of infection.

It localises to the cytoplasm. The protein localises to the perinuclear region. It is found in the golgi apparatus. Its subcellular location is the trans-Golgi network. The protein resides in the cytoplasmic vesicle. It localises to the autophagosome. The protein localises to the recycling endosome. Plays an important role in the maintenance of the Golgi complex, in membrane trafficking, in exocytosis, through its interaction with myosin VI and Rab8. Links myosin VI to the Golgi complex and plays an important role in Golgi ribbon formation. Negatively regulates the induction of IFNB in response to RNA virus infection. Plays a neuroprotective role in the eye and optic nerve. Probably part of the TNF-alpha signaling pathway that can shift the equilibrium toward induction of cell death. May act by regulating membrane trafficking and cellular morphogenesis via a complex that contains Rab8 and huntingtin (HD). Mediates the interaction of Rab8 with the probable GTPase-activating protein TBC1D17 during Rab8-mediated endocytic trafficking, such as that of transferrin receptor (TFRC/TfR); regulates Rab8 recruitment to tubules emanating from the endocytic recycling compartment. Autophagy receptor that interacts directly with both the cargo to become degraded and an autophagy modifier of the MAP1 LC3 family; targets ubiquitin-coated bacteria (xenophagy) and appears to function in the same pathway as SQSTM1 and CALCOCO2/NDP52. This Macaca fascicularis (Crab-eating macaque) protein is Optineurin (OPTN).